We begin with the raw amino-acid sequence, 438 residues long: MVQFYSPNRRTVNRHIITVTADNLDAQGQGVARHQGKTIFVAGLLPGEQAQVQLTEEKRQFAKAKLVKRLSDSPYRVNPRCPHFGVCGGCQQQHVAPDLQRESKASVLEHLIRRETGVTVSAKPVILGPEYGYRRRARLGLHYQIKQRQLVIGFRQNQSNELVAIKECPVLRPELEQLLQPLSQCLNSLKAVKRLGHVELVLADNGPLMILRHLDPLKREDKEKLGTFSVQHNVAVYLAADETSLESLNELPEPWYQVDGLKLVFSPRDFIQVNDQVNQQMVAQAIEWLDLQPNDNVLDLFCGMGNFTLPIGRIVQSVVGVEGVATLVANGQYNAKINNLDNISFCHENLEADIHHQPWAKLGFNKVLLDPARAGAVGVMSHIVELVPEKVVYVSCNPTTLARDSKILLEAGYQIISVRMLDMFPHTGHLESMALFSR.

The region spanning 9 to 68 (RRTVNRHIITVTADNLDAQGQGVARHQGKTIFVAGLLPGEQAQVQLTEEKRQFAKAKLVK) is the TRAM domain. Positions 81, 87, 90, and 168 each coordinate [4Fe-4S] cluster. The S-adenosyl-L-methionine site is built by Gln-272, Phe-301, Asn-306, Glu-322, Asn-349, and Asp-370. Catalysis depends on Cys-396, which acts as the Nucleophile.

This sequence belongs to the class I-like SAM-binding methyltransferase superfamily. RNA M5U methyltransferase family. RlmD subfamily.

It catalyses the reaction uridine(1939) in 23S rRNA + S-adenosyl-L-methionine = 5-methyluridine(1939) in 23S rRNA + S-adenosyl-L-homocysteine + H(+). Its function is as follows. Catalyzes the formation of 5-methyl-uridine at position 1939 (m5U1939) in 23S rRNA. In Photorhabdus laumondii subsp. laumondii (strain DSM 15139 / CIP 105565 / TT01) (Photorhabdus luminescens subsp. laumondii), this protein is 23S rRNA (uracil(1939)-C(5))-methyltransferase RlmD.